Here is a 100-residue protein sequence, read N- to C-terminus: Integration host factor subunit alpha (100 aa).

This sequence belongs to the bacterial histone-like protein family. Heterodimer of an alpha and a beta chain.

This protein is one of the two subunits of integration host factor, a specific DNA-binding protein that functions in genetic recombination as well as in transcriptional and translational control. The sequence is that of Integration host factor subunit alpha from Buchnera aphidicola subsp. Schizaphis graminum (strain Sg).